The primary structure comprises 891 residues: DNA mismatch repair protein MutS (891 aa).

Gly617–Ser624 lines the ATP pocket. The segment covering Arg805–Lys827 has biased composition (basic and acidic residues). The interval Arg805–Arg840 is disordered.

It belongs to the DNA mismatch repair MutS family.

Functionally, this protein is involved in the repair of mismatches in DNA. It is possible that it carries out the mismatch recognition step. This protein has a weak ATPase activity. In Porphyromonas gingivalis (strain ATCC BAA-308 / W83), this protein is DNA mismatch repair protein MutS.